Consider the following 78-residue polypeptide: UPF0270 protein IL0325 (78 aa).

Belongs to the UPF0270 family.

This chain is UPF0270 protein IL0325, found in Idiomarina loihiensis (strain ATCC BAA-735 / DSM 15497 / L2-TR).